The primary structure comprises 382 residues: Guanylate kinase 1 (382 aa).

Residues Q128–S310 form the Guanylate kinase-like domain. An ATP-binding site is contributed by G135–G142. Active-site residues include R168, R261, and R272. ATP contacts are provided by N295 and D296.

This sequence belongs to the guanylate kinase family. In terms of assembly, monomer.

Its subcellular location is the cytoplasm. The protein resides in the nucleus. It catalyses the reaction GMP + ATP = GDP + ADP. Functionally, essential for recycling GMP and indirectly, cGMP. The chain is Guanylate kinase 1 (GK1) from Oryza sativa subsp. japonica (Rice).